Consider the following 339-residue polypeptide: Cyclin-Y-like protein 1 (339 aa).

A Cyclin N-terminal domain is found at 181–263 (QLTAECAIVT…FLELLQFNIN (83 aa)).

The protein belongs to the cyclin family. Cyclin Y subfamily.

The protein localises to the cell membrane. Functionally, key regulator of Wnt signaling implicated in various biological processes such as embryonic neurogenesis. This chain is Cyclin-Y-like protein 1 (ccnyl1), found in Danio rerio (Zebrafish).